A 444-amino-acid polypeptide reads, in one-letter code: Putative cytochrome P450 120 (444 aa).

Residue Cys-391 participates in heme binding.

This sequence belongs to the cytochrome P450 family. The cofactor is heme.

The polypeptide is Putative cytochrome P450 120 (cyp120) (Synechocystis sp. (strain ATCC 27184 / PCC 6803 / Kazusa)).